We begin with the raw amino-acid sequence, 719 residues long: Catalase-3 (719 aa).

The N-terminal stretch at methionine 1–alanine 18 is a signal peptide. A propeptide spanning residues alanine 19–arginine 30 is cleaved from the precursor. Active-site residues include histidine 102 and asparagine 175. Tyrosine 389 is a heme binding site.

Belongs to the catalase family. Heme serves as cofactor.

It carries out the reaction 2 H2O2 = O2 + 2 H2O. In terms of biological role, occurs in almost all aerobically respiring organisms and serves to protect cells from the toxic effects of hydrogen peroxide. The chain is Catalase-3 (cat-3) from Neurospora crassa (strain ATCC 24698 / 74-OR23-1A / CBS 708.71 / DSM 1257 / FGSC 987).